Reading from the N-terminus, the 100-residue chain is Urease subunit gamma (100 aa).

Belongs to the urease gamma subunit family. In terms of assembly, heterotrimer of UreA (gamma), UreB (beta) and UreC (alpha) subunits. Three heterotrimers associate to form the active enzyme.

The protein resides in the cytoplasm. The enzyme catalyses urea + 2 H2O + H(+) = hydrogencarbonate + 2 NH4(+). It functions in the pathway nitrogen metabolism; urea degradation; CO(2) and NH(3) from urea (urease route): step 1/1. This chain is Urease subunit gamma, found in Halalkalibacterium halodurans (strain ATCC BAA-125 / DSM 18197 / FERM 7344 / JCM 9153 / C-125) (Bacillus halodurans).